The following is a 242-amino-acid chain: E3 ubiquitin-protein ligase ZNRF2 (242 aa).

The interval 1–141 is disordered; it reads MGAKQSGPAA…VGGSPGGPRL (141 aa). Gly-2 is lipidated: N-myristoyl glycine. Phosphoserine is present on residues Ser-19, Ser-21, and Ser-25. Residues 19–29 are compositionally biased toward low complexity; the sequence is SGSDLPSSSSG. Residues 30–41 are compositionally biased toward gly residues; the sequence is GANGTAGGGGGA. Low complexity predominate over residues 59 to 97; it reads PSASGGAAAAAAAPAAPAAPRSRSLGGAVGSVASGARAA. Phosphoserine is present on residues Ser-82, Ser-89, Ser-113, Ser-116, and Ser-135. The span at 99-118 shows a compositional bias: polar residues; that stretch reads SPFSIPNSSSGPYGSQDSVH. Ser-145 carries the phosphoserine; by MTOR modification. Phosphoserine occurs at positions 151 and 193. Residues 199–240 form an RING-type; atypical zinc finger; that stretch reads CAICLEELQQGDTIARLPCLCIYHKGCIDEWFEVNRSCPEHP.

Interacts with UBE2N. Interacts with ZNRF1. Interacts (when phosphorylated) with YWHAE. Phosphorylated; leading to binding to YWHAE. Phosphorylated by MTOR at Ser-145 and dephosphorylated by PP6C. Ser-145 phosphorylation stimulates vesicle-to-cytosol translocation. As to expression, highly expressed in the brain, with higher expression during development than in adult. Expressed also in mammary glands, testis, colon and kidney.

The protein resides in the endosome membrane. The protein localises to the lysosome membrane. Its subcellular location is the presynaptic cell membrane. It localises to the cytoplasm. The enzyme catalyses S-ubiquitinyl-[E2 ubiquitin-conjugating enzyme]-L-cysteine + [acceptor protein]-L-lysine = [E2 ubiquitin-conjugating enzyme]-L-cysteine + N(6)-ubiquitinyl-[acceptor protein]-L-lysine.. The protein operates within protein modification; protein ubiquitination. In terms of biological role, E3 ubiquitin-protein ligase that plays a role in the establishment and maintenance of neuronal transmission and plasticity. Ubiquitinates the Na(+)/K(+) ATPase alpha-1 subunit/ATP1A1 and thereby influences its endocytosis and/or degradation. Acts also as a positive regulator of mTORC1 activation by amino acids, which functions upstream of the V-ATPase and of Rag-GTPases. In turn, phosphorylation by mTOR leads to its inhibition via targeting to the cytosol allowing a self-regulating feedback mechanism. This Homo sapiens (Human) protein is E3 ubiquitin-protein ligase ZNRF2 (ZNRF2).